The following is a 147-amino-acid chain: Small ribosomal subunit protein eS19 (147 aa).

This sequence belongs to the eukaryotic ribosomal protein eS19 family. In terms of assembly, component of the small ribosomal subunit.

The protein resides in the cytoplasm. It is found in the nucleus. Component of the small ribosomal subunit. The ribosome is a large ribonucleoprotein complex responsible for the synthesis of proteins in the cell. Required for pre-rRNA processing and maturation of 40S ribosomal subunits. This Gillichthys mirabilis (Long-jawed mudsucker) protein is Small ribosomal subunit protein eS19 (rps19).